A 208-amino-acid polypeptide reads, in one-letter code: Small ribosomal subunit protein uS4 (208 aa).

The region spanning 98-163 is the S4 RNA-binding domain; the sequence is TRLDNVVFRL…TPLFKEIVDG (66 aa).

The protein belongs to the universal ribosomal protein uS4 family. Part of the 30S ribosomal subunit. Contacts protein S5. The interaction surface between S4 and S5 is involved in control of translational fidelity.

In terms of biological role, one of the primary rRNA binding proteins, it binds directly to 16S rRNA where it nucleates assembly of the body of the 30S subunit. With S5 and S12 plays an important role in translational accuracy. This chain is Small ribosomal subunit protein uS4, found in Heliobacterium modesticaldum (strain ATCC 51547 / Ice1).